The chain runs to 62 residues: Double zinc ribbon protein TK0111 (62 aa).

8 residues coordinate Zn(2+): Cys13, Cys16, Cys31, Cys34, Cys42, Cys45, Cys54, and Cys57.

As to quaternary structure, crystallized in association with 70S ribosomes. The cofactor is Zn(2+).

The polypeptide is Double zinc ribbon protein TK0111 (Thermococcus kodakarensis (strain ATCC BAA-918 / JCM 12380 / KOD1) (Pyrococcus kodakaraensis (strain KOD1))).